A 68-amino-acid polypeptide reads, in one-letter code: uncharacterized protein (68 aa).

An N-terminal signal peptide occupies residues 1–15 (MTIIFLICLDASTQS). Positions 14-68 (QSTTNNSINNNNNNNNNNNNNNNNNNNNNNNNNNNNNNNNNNNNNNSKVFDFNIF) are disordered. N-linked (GlcNAc...) asparagine glycans are attached at residues Asn-18 and Asn-58. Over residues 22-59 (NNNNNNNNNNNNNNNNNNNNNNNNNNNNNNNNNNNNNN) the composition is skewed to low complexity.

The protein localises to the secreted. This is an uncharacterized protein from Dictyostelium discoideum (Social amoeba).